The sequence spans 211 residues: Probable GTP-binding protein EngB (211 aa).

One can recognise an EngB-type G domain in the interval S26–T200. GTP-binding positions include G34–S41, G61–L65, D79–G82, T146–D149, and F179–S181. 2 residues coordinate Mg(2+): S41 and T63.

The protein belongs to the TRAFAC class TrmE-Era-EngA-EngB-Septin-like GTPase superfamily. EngB GTPase family. The cofactor is Mg(2+).

Its function is as follows. Necessary for normal cell division and for the maintenance of normal septation. This chain is Probable GTP-binding protein EngB, found in Pectobacterium carotovorum subsp. carotovorum (strain PC1).